The primary structure comprises 423 residues: Serine--tRNA ligase (423 aa).

Basic and acidic residues-rich tracts occupy residues 1-24 (MIDL…RGED) and 62-71 (KMRDASPEEK). Positions 1 to 71 (MIDLKQLRDD…KMRDASPEEK (71 aa)) are disordered. 230-232 (TSE) is a binding site for L-serine. ATP contacts are provided by residues 261 to 263 (RRE) and V277. E284 lines the L-serine pocket. 348–351 (ELTS) is a binding site for ATP. T383 is a binding site for L-serine.

Belongs to the class-II aminoacyl-tRNA synthetase family. Type-1 seryl-tRNA synthetase subfamily. As to quaternary structure, homodimer. The tRNA molecule binds across the dimer.

The protein resides in the cytoplasm. It catalyses the reaction tRNA(Ser) + L-serine + ATP = L-seryl-tRNA(Ser) + AMP + diphosphate + H(+). The catalysed reaction is tRNA(Sec) + L-serine + ATP = L-seryl-tRNA(Sec) + AMP + diphosphate + H(+). It participates in aminoacyl-tRNA biosynthesis; selenocysteinyl-tRNA(Sec) biosynthesis; L-seryl-tRNA(Sec) from L-serine and tRNA(Sec): step 1/1. Functionally, catalyzes the attachment of serine to tRNA(Ser). Is also able to aminoacylate tRNA(Sec) with serine, to form the misacylated tRNA L-seryl-tRNA(Sec), which will be further converted into selenocysteinyl-tRNA(Sec). The polypeptide is Serine--tRNA ligase (Corynebacterium kroppenstedtii (strain DSM 44385 / JCM 11950 / CIP 105744 / CCUG 35717)).